Reading from the N-terminus, the 517-residue chain is Succinyl-CoA:3-ketoacid coenzyme A transferase 2, mitochondrial (517 aa).

The transit peptide at 1 to 39 (MAALRLLASVLGRGVPAGGSGLALSQGCARCFATSPRLR) directs the protein to the mitochondrion. Residue glutamate 341 is the 5-glutamyl coenzyme A thioester intermediate of the active site.

It belongs to the 3-oxoacid CoA-transferase family. In terms of assembly, homodimer. As to expression, testis specific.

The protein localises to the mitochondrion. It carries out the reaction a 3-oxo acid + succinyl-CoA = a 3-oxoacyl-CoA + succinate. Its pathway is ketone metabolism; succinyl-CoA degradation; acetoacetyl-CoA from succinyl-CoA: step 1/1. Its function is as follows. Key enzyme for ketone body catabolism. Transfers the CoA moiety from succinate to acetoacetate. Formation of the enzyme-CoA intermediate proceeds via an unstable anhydride species formed between the carboxylate groups of the enzyme and substrate. The protein is Succinyl-CoA:3-ketoacid coenzyme A transferase 2, mitochondrial (OXCT2) of Homo sapiens (Human).